The chain runs to 210 residues: ATP-dependent Clp protease proteolytic subunit (210 aa).

Serine 106 (nucleophile) is an active-site residue. Residue histidine 131 is part of the active site.

Belongs to the peptidase S14 family. As to quaternary structure, fourteen ClpP subunits assemble into 2 heptameric rings which stack back to back to give a disk-like structure with a central cavity, resembling the structure of eukaryotic proteasomes.

The protein resides in the cytoplasm. The enzyme catalyses Hydrolysis of proteins to small peptides in the presence of ATP and magnesium. alpha-casein is the usual test substrate. In the absence of ATP, only oligopeptides shorter than five residues are hydrolyzed (such as succinyl-Leu-Tyr-|-NHMec, and Leu-Tyr-Leu-|-Tyr-Trp, in which cleavage of the -Tyr-|-Leu- and -Tyr-|-Trp bonds also occurs).. In terms of biological role, cleaves peptides in various proteins in a process that requires ATP hydrolysis. Has a chymotrypsin-like activity. Plays a major role in the degradation of misfolded proteins. The chain is ATP-dependent Clp protease proteolytic subunit from Bartonella tribocorum (strain CIP 105476 / IBS 506).